The chain runs to 607 residues: V-type proton ATPase catalytic subunit A (607 aa).

Gly246–Thr253 serves as a coordination point for ATP.

This sequence belongs to the ATPase alpha/beta chains family. In terms of assembly, V-ATPase is a heteromultimeric enzyme composed of a peripheral catalytic V1 complex (components A to H) attached to an integral membrane V0 proton pore complex (components: a, c, c', c'', d, e, f and VOA1).

The protein resides in the vacuole membrane. It catalyses the reaction ATP + H2O + 4 H(+)(in) = ADP + phosphate + 5 H(+)(out). In terms of biological role, catalytic subunit of the V1 complex of vacuolar(H+)-ATPase (V-ATPase), a multisubunit enzyme composed of a peripheral complex (V1) that hydrolyzes ATP and a membrane integral complex (V0) that translocates protons. V-ATPase is responsible for acidifying and maintaining the pH of intracellular compartments. The sequence is that of V-type proton ATPase catalytic subunit A (vma-1) from Neurospora crassa (strain ATCC 24698 / 74-OR23-1A / CBS 708.71 / DSM 1257 / FGSC 987).